The chain runs to 141 residues: Galactose-6-phosphate isomerase subunit LacA (141 aa).

This sequence belongs to the LacAB/RpiB family. In terms of assembly, heteromultimeric protein consisting of LacA and LacB.

It carries out the reaction aldehydo-D-galactose 6-phosphate = keto-D-tagatose 6-phosphate. Its pathway is carbohydrate metabolism; D-galactose 6-phosphate degradation; D-tagatose 6-phosphate from D-galactose 6-phosphate: step 1/1. The chain is Galactose-6-phosphate isomerase subunit LacA from Streptococcus agalactiae serotype Ia (strain ATCC 27591 / A909 / CDC SS700).